The chain runs to 491 residues: Tyrosine 3-monooxygenase (491 aa).

The residue at position 19 (Ser-19) is a Phosphoserine; by CaMK2. The residue at position 31 (Ser-31) is a Phosphoserine. Residue Ser-40 is modified to Phosphoserine; by CaMK2 and PKA. Residues His-324, His-329, and Glu-369 each contribute to the Fe cation site. The residue at position 465 (Ser-465) is a Phosphoserine.

It belongs to the biopterin-dependent aromatic amino acid hydroxylase family. Homotetramer. Interacts (when phosphorylated at Ser-19) with YWHAG; one YWHAG dimer bounds to one TH tetramer and this interaction may influence the phosphorylation and dephosphorylation of other sites. Interacts with NT5DC2; the interaction results in reduced phosphorylation and decreased catalytic activity of TH. The cofactor is Fe(2+). In terms of processing, phosphorylated on Ser-19, Ser-31 and Ser-40 by several protein kinases with different site specificities. Phosphorylation at Ser-31 and Ser-40 leads to an increase of TH activity. Phosphorylation at Ser-40 activates the enzyme and also counteracts the feedback inhibition of TH by catecholamines. Phosphorylation of Ser-19 and Ser-31 triggers the proteasomal degradation of TH through the ubiquitin-proteasome pathway. Phosphorylation at Ser-31 facilitates transport of TH from the soma to the nerve terminals via the microtubule network. Phosphorylation at Ser-19 induces the high-affinity binding to the 14-3-3 protein YWHAG; this interaction may influence the phosphorylation and dephosphorylation of other sites. Ser-19 increases the phosphorylation at Ser-40 in a hierarchical manner, leading to increased activity.

It is found in the cytoplasm. It localises to the perinuclear region. Its subcellular location is the nucleus. The protein resides in the cell projection. The protein localises to the axon. It is found in the cytoplasmic vesicle. It localises to the secretory vesicle. Its subcellular location is the synaptic vesicle. The enzyme catalyses (6R)-L-erythro-5,6,7,8-tetrahydrobiopterin + L-tyrosine + O2 = (4aS,6R)-4a-hydroxy-L-erythro-5,6,7,8-tetrahydrobiopterin + L-dopa. The protein operates within catecholamine biosynthesis; dopamine biosynthesis; dopamine from L-tyrosine: step 1/2. With respect to regulation, inhibited in feedback fashion by the catecholamine neurotransmitters, especially by dopamine in competition with tetrahydrobiopterin. Phosphorylation of several Ser/Thr residues in the N-terminus regulates the catalytic activity. Ser-31 and Ser-40 are readily phosphorylated to activate the catalytic activity. A Cysteine modification induced by N-ethylmaleimide (NEM), inhibits tyrosine 3-monooxygenase activity through the modification of the Cys-170. Its function is as follows. Catalyzes the conversion of L-tyrosine to L-dihydroxyphenylalanine (L-Dopa), the rate-limiting step in the biosynthesis of catecholamines, dopamine, noradrenaline, and adrenaline. Uses tetrahydrobiopterin and molecular oxygen to convert tyrosine to L-Dopa. In addition to tyrosine, is able to catalyze the hydroxylation of phenylalanine and tryptophan with lower specificity. Positively regulates the regression of retinal hyaloid vessels during postnatal development. This Bos taurus (Bovine) protein is Tyrosine 3-monooxygenase (TH).